A 579-amino-acid polypeptide reads, in one-letter code: Isocitrate dehydrogenase kinase/phosphatase (579 aa).

ATP contacts are provided by residues 324–330 and Lys345; that span reads ADGTPGM. Asp380 is an active-site residue.

It belongs to the AceK family.

The protein resides in the cytoplasm. It catalyses the reaction L-seryl-[isocitrate dehydrogenase] + ATP = O-phospho-L-seryl-[isocitrate dehydrogenase] + ADP + H(+). Functionally, bifunctional enzyme which can phosphorylate or dephosphorylate isocitrate dehydrogenase (IDH) on a specific serine residue. This is a regulatory mechanism which enables bacteria to bypass the Krebs cycle via the glyoxylate shunt in response to the source of carbon. When bacteria are grown on glucose, IDH is fully active and unphosphorylated, but when grown on acetate or ethanol, the activity of IDH declines drastically concomitant with its phosphorylation. The chain is Isocitrate dehydrogenase kinase/phosphatase from Xanthomonas euvesicatoria pv. vesicatoria (strain 85-10) (Xanthomonas campestris pv. vesicatoria).